Here is a 265-residue protein sequence, read N- to C-terminus: 3-methyl-2-oxobutanoate hydroxymethyltransferase (265 aa).

Mg(2+)-binding residues include Asp45 and Asp84. Residues 45 to 46 (DS), Asp84, and Lys114 each bind 3-methyl-2-oxobutanoate. Glu116 contributes to the Mg(2+) binding site. Glu183 acts as the Proton acceptor in catalysis.

It belongs to the PanB family. Homodecamer; pentamer of dimers. Mg(2+) is required as a cofactor.

It is found in the cytoplasm. It carries out the reaction 3-methyl-2-oxobutanoate + (6R)-5,10-methylene-5,6,7,8-tetrahydrofolate + H2O = 2-dehydropantoate + (6S)-5,6,7,8-tetrahydrofolate. It functions in the pathway cofactor biosynthesis; (R)-pantothenate biosynthesis; (R)-pantoate from 3-methyl-2-oxobutanoate: step 1/2. Functionally, catalyzes the reversible reaction in which hydroxymethyl group from 5,10-methylenetetrahydrofolate is transferred onto alpha-ketoisovalerate to form ketopantoate. The chain is 3-methyl-2-oxobutanoate hydroxymethyltransferase from Salinibacter ruber (strain DSM 13855 / M31).